The chain runs to 232 residues: Eukaryotic translation initiation factor NCBP (232 aa).

Residues 1 to 11 (MEPAVERKVPE) show a composition bias toward basic and acidic residues. A disordered region spans residues 1 to 49 (MEPAVERKVPEQEEQLQPSHARAEDAPPAAVEEEDEAEAEESERRNREL). The segment covering 31-41 (VEEEDEAEAEE) has biased composition (acidic residues).

The protein belongs to the eukaryotic initiation factor 4E family. In terms of assembly, EIF4F is a multi-subunit complex, the composition of which varies with external and internal environmental conditions. It is composed of at least EIF4A, EIF4E and EIF4G. EIF4E is also known to interact with other partners. In higher plants two isoforms of EIF4F have been identified, named isoform EIF4F and isoform EIF(iso)4F. Isoform EIF4F has subunits p220 and p26, whereas isoform EIF(iso)4F has subunits p82 and p28.

In terms of biological role, recognizes and binds the 7-methylguanosine-containing mRNA cap during an early step in the initiation of protein synthesis and facilitates ribosome binding by inducing the unwinding of the mRNAs secondary structures. The chain is Eukaryotic translation initiation factor NCBP (NCBP) from Triticum aestivum (Wheat).